A 1191-amino-acid polypeptide reads, in one-letter code: Rho GTPase-activating protein 20 (1191 aa).

Positions 1–23 (MEAMSPQQETLGGQPGRSSSLTG) are enriched in polar residues. A disordered region spans residues 1 to 45 (MEAMSPQQETLGGQPGRSSSLTGVSRLAGGSCTKKKMKTLAERRR). At serine 46 the chain carries Phosphoserine. Residues 78–180 (SLVCSNRTLL…EQKDKWLSLL (103 aa)) form the PH domain. The Ras-associating domain occupies 194–295 (KSIPLKIFAK…TPFNLQEPFL (102 aa)). A Rho-GAP domain is found at 365 to 551 (ISLPNICEND…FLIENCLRIF (187 aa)). Residues serine 704 and serine 730 each carry the phosphoserine modification. Disordered stretches follow at residues 768-791 (SKKN…NHVK), 926-1014 (RLNL…SRPA), 1052-1123 (KKAK…RHCS), and 1140-1191 (HEEI…TKDI). A compositionally biased stretch (low complexity) spans 934 to 961 (SYSSLSSPGTSPSGSSVSSQDSAFSQIS). Polar residues-rich tracts occupy residues 962–981 (EHSV…TFQA) and 1103–1116 (PVQS…SPFQ). A compositionally biased stretch (basic and acidic residues) spans 1182-1191 (IEDRYLTKDI).

Expressed predominantly in the brain. Lower expression is found in lymph nodes.

Functionally, GTPase activator for the Rho-type GTPases by converting them to an inactive GDP-bound state. This Homo sapiens (Human) protein is Rho GTPase-activating protein 20 (ARHGAP20).